The primary structure comprises 186 residues: Protein MTH_152 (186 aa).

It belongs to the flavoredoxin family. Homodimer. The cofactor is FMN.

The polypeptide is Protein MTH_152 (Methanothermobacter thermautotrophicus (strain ATCC 29096 / DSM 1053 / JCM 10044 / NBRC 100330 / Delta H) (Methanobacterium thermoautotrophicum)).